A 316-amino-acid chain; its full sequence is Transaldolase A (316 aa).

The active-site Schiff-base intermediate with substrate is the Lys-131.

It belongs to the transaldolase family. Type 1 subfamily. Homodimer.

It is found in the cytoplasm. The enzyme catalyses D-sedoheptulose 7-phosphate + D-glyceraldehyde 3-phosphate = D-erythrose 4-phosphate + beta-D-fructose 6-phosphate. It participates in carbohydrate degradation; pentose phosphate pathway; D-glyceraldehyde 3-phosphate and beta-D-fructose 6-phosphate from D-ribose 5-phosphate and D-xylulose 5-phosphate (non-oxidative stage): step 2/3. Functionally, transaldolase is important for the balance of metabolites in the pentose-phosphate pathway. The protein is Transaldolase A of Salmonella typhimurium (strain LT2 / SGSC1412 / ATCC 700720).